Here is a 619-residue protein sequence, read N- to C-terminus: MAAAAAAAAAGDSPRRGTPDSDEEDYEEYVPVAKRRAMEAERLRRATKPPTTNAVAVAAPPPPPRSTSSPAVGEVAVKTSLLVKATKLKREAPEVTPAERLLQQEREMIEHLSDRKALMPVGEIAKGISYSEPITTGWRPPLRLRRMPRSRADALRRSWHILVDGDDVPPPSRSFGDLRLPEPILRALRGKGIEKPTPIQVQGLPVALSGRDMIGIAFTGSGKTLVFVLPLIMAALQEEILMPIVPGEGPFGLIVCPSRELARQTHEVIEMFLAPLMEAGYPEIRPLLCIGGVDMRTQMEVVKKGVHIVVATPGRLKDLLSKKKMNLDNCRYLTLDEADRLVDLGFEDDIREVFDHFKAQRQTLLFSATMPEKIQNFAKSALVKPIIVNVGRAGAANLDVIQEVEYVKEEARIIYLLECLQKTPPPVLVFCEHKADVDYIQEFLLLKGVEAVAIHGGKDDEERKDAFKSFKASEKDVLVATDVASKGLDIPDIQHVINYDMPAEIENYVHRIGRTGRRGKTGVATTFINKNQTETTLLDLKQLLIESKQRLPPILADLDDPQEDDKVAIAQQSGVKGCAFCGGLGHRIEACPKQQLQNSVTLARARSDYFGGGGYRGEI.

Composition is skewed to low complexity over residues M1–A10 and P49–A58. The disordered stretch occupies residues M1–V72. Positions R173 to V201 match the Q motif motif. Residues L204 to V388 enclose the Helicase ATP-binding domain. A217 to T224 is an ATP binding site. Positions D336–D339 match the DEAD box motif. Residues D399 to D559 form the Helicase C-terminal domain. A CCHC-type zinc finger spans residues K576–K593.

The protein belongs to the DEAD box helicase family. DDX41 subfamily.

It carries out the reaction ATP + H2O = ADP + phosphate + H(+). This Oryza sativa subsp. japonica (Rice) protein is DEAD-box ATP-dependent RNA helicase 35B.